A 440-amino-acid polypeptide reads, in one-letter code: Acyltransferase Pun1 (440 aa).

Catalysis depends on proton acceptor residues histidine 169 and aspartate 384.

It belongs to the plant acyltransferase family.

The catalysed reaction is vanillylamine + (6E)-8-methylnon-6-enoyl-CoA = capsaicin + CoA + H(+). It catalyses the reaction (6E)-8-methylnon-6-enoyl-CoA + 4-hydroxy-3-methoxy-benzenemethanol = capsiate + CoA. Involved in the biosynthesis of capsaicinoids and capsinoids natural products, pungent alkaloids synthesized from phenylpropanoid intermediates in the placental tissue of chili pepper fruit acting as repellant on herbivorous mammals and conferring spiciness to hot peppers. Catalyzes the biosynthesis of capsaicin, a pungent component, and of capsiate, a non-pungent component, from vanillylamine and vanillyl alcohol, respectively. Can transfer an acyl from 8-methylnon-6-enoyl-CoA to vanillylamine forming capsaicin and CoA. The protein is Acyltransferase Pun1 of Capsicum frutescens (Cayenne pepper).